Reading from the N-terminus, the 82-residue chain is Putative membrane protein insertion efficiency factor (82 aa).

It belongs to the UPF0161 family.

It is found in the cell inner membrane. Its function is as follows. Could be involved in insertion of integral membrane proteins into the membrane. The chain is Putative membrane protein insertion efficiency factor from Rickettsia peacockii (strain Rustic).